Consider the following 209-residue polypeptide: Uridine kinase (209 aa).

12-19 (GGSASGKT) is a binding site for ATP.

This sequence belongs to the uridine kinase family.

Its subcellular location is the cytoplasm. The enzyme catalyses uridine + ATP = UMP + ADP + H(+). The catalysed reaction is cytidine + ATP = CMP + ADP + H(+). It functions in the pathway pyrimidine metabolism; CTP biosynthesis via salvage pathway; CTP from cytidine: step 1/3. It participates in pyrimidine metabolism; UMP biosynthesis via salvage pathway; UMP from uridine: step 1/1. This is Uridine kinase from Chloroflexus aggregans (strain MD-66 / DSM 9485).